A 55-amino-acid polypeptide reads, in one-letter code: uncharacterized protein (55 aa).

It is found in the plastid. This is an uncharacterized protein from Cuscuta reflexa (Southern Asian dodder).